Reading from the N-terminus, the 523-residue chain is Cyclin-dependent kinase 17 (523 aa).

The residue at position 9 (Ser9) is a Phosphoserine. Positions 30 to 55 (TIEESSSKDNEPIVKNGRPPTSHSVH) are disordered. Phosphoserine is present on residues Ser80, Ser92, and Ser105. Positions 103–123 (MGSDGESDQASGTSSDEVQSP) are disordered. The segment covering 110–123 (DQASGTSSDEVQSP) has biased composition (polar residues). 4 positions are modified to phosphoserine: Ser137, Ser146, Ser165, and Ser180. A Protein kinase domain is found at 192-473 (YIKLEKLGEG…AEEAMKHVYF (282 aa)). ATP contacts are provided by residues 198 to 206 (LGEGTYATV) and Lys221. Asp313 functions as the Proton acceptor in the catalytic mechanism. The tract at residues 501–523 (PGFRNSSYPETGHGKNRRQSMLF) is disordered. The span at 514–523 (GKNRRQSMLF) shows a compositional bias: basic residues.

Belongs to the protein kinase superfamily. CMGC Ser/Thr protein kinase family. CDC2/CDKX subfamily. Found in a complex containing CABLES1, CDK16 and TDRD7. Interacts with TDRD7.

The enzyme catalyses L-seryl-[protein] + ATP = O-phospho-L-seryl-[protein] + ADP + H(+). The catalysed reaction is L-threonyl-[protein] + ATP = O-phospho-L-threonyl-[protein] + ADP + H(+). May play a role in terminally differentiated neurons. Has a Ser/Thr-phosphorylating activity for histone H1. The protein is Cyclin-dependent kinase 17 (Cdk17) of Mus musculus (Mouse).